Reading from the N-terminus, the 235-residue chain is 6-phosphogluconolactonase (235 aa).

Belongs to the glucosamine/galactosamine-6-phosphate isomerase family. 6-phosphogluconolactonase subfamily.

It catalyses the reaction 6-phospho-D-glucono-1,5-lactone + H2O = 6-phospho-D-gluconate + H(+). It functions in the pathway carbohydrate degradation; pentose phosphate pathway; D-ribulose 5-phosphate from D-glucose 6-phosphate (oxidative stage): step 2/3. In terms of biological role, hydrolysis of 6-phosphogluconolactone to 6-phosphogluconate. The polypeptide is 6-phosphogluconolactonase (pgl) (Borreliella burgdorferi (strain ATCC 35210 / DSM 4680 / CIP 102532 / B31) (Borrelia burgdorferi)).